The primary structure comprises 380 residues: Fibromodulin (380 aa).

The N-terminal stretch at 1–18 (MRWANILLVAGLCRASLG) is a signal peptide. One can recognise an LRRNT domain in the interval 71–109 (EAQQASSWQCPQECDCPPNFSSAMYCDTRNLRYLPFVPT). A glycan (N-linked (GlcNAc...) asparagine) is linked at Asn-89. LRR repeat units lie at residues 110–131 (RMKYVYFQNNQITAIQEGAFDN), 134–147 (ELEWLALHNNQISS), 160–180 (NLERLYMNNNNLTKMPSPLPR), 181–202 (SLRELHLSYNQISKVPSNALEG), 205–227 (NLTALYLSHNYIFEMGASLKGLK), 228–248 (SLILADLSYNHLRKVPDGLPM), 249–270 (ALEQLYLEYNYINAIPDDYFKV), and 273–293 (KLLYVRMSHNSLTNQGLSTNT). Asn-131 carries an N-linked (GlcNAc...) (keratan sulfate) asparagine glycan. Asn-170 is a glycosylation site (N-linked (GlcNAc...) (keratan sulfate) asparagine). N-linked (GlcNAc...) (keratan sulfate) asparagine glycosylation is present at Asn-205. Residue Asn-295 is glycosylated (N-linked (GlcNAc...) (keratan sulfate) asparagine). 2 LRR repeats span residues 298–317 (SILELDLSYNRLQKIPRVST) and 318–339 (NLENLYLQGNQINEFSISSFCT). A disulfide bridge links Cys-338 with Cys-371. Asn-345 carries an N-linked (GlcNAc...) asparagine glycan. The LRR 11 repeat unit spans residues 348–371 (RLQVLRLDGNEIKRNAMPPDAPLC).

It belongs to the small leucine-rich proteoglycan (SLRP) family. SLRP class II subfamily. Binds to type I and type II collagen. In terms of processing, binds keratan sulfate chains.

It is found in the secreted. The protein localises to the extracellular space. It localises to the extracellular matrix. Its function is as follows. Affects the rate of fibrils formation. May have a primary role in collagen fibrillogenesis. The sequence is that of Fibromodulin (FMOD) from Gallus gallus (Chicken).